We begin with the raw amino-acid sequence, 504 residues long: Histidine ammonia-lyase (504 aa).

The segment at residues 141–143 is a cross-link (5-imidazolinone (Ala-Gly)); it reads ASG. S142 carries the post-translational modification 2,3-didehydroalanine (Ser).

It belongs to the PAL/histidase family. Post-translationally, contains an active site 4-methylidene-imidazol-5-one (MIO), which is formed autocatalytically by cyclization and dehydration of residues Ala-Ser-Gly.

The protein localises to the cytoplasm. It carries out the reaction L-histidine = trans-urocanate + NH4(+). Its pathway is amino-acid degradation; L-histidine degradation into L-glutamate; N-formimidoyl-L-glutamate from L-histidine: step 1/3. The sequence is that of Histidine ammonia-lyase from Geobacillus thermodenitrificans (strain NG80-2).